A 655-amino-acid polypeptide reads, in one-letter code: A-type voltage-gated potassium channel KCND3 (655 aa).

Over 1-182 (MAAGVAAWLP…FENPHTSTLA (182 aa)) the chain is Cytoplasmic. 2 interaction with KCNIP1 regions span residues 6 to 21 (AAWLPFARAAAIGWMP) and 70 to 78 (EKEFFFNED). Zn(2+) is bound by residues His-104, Cys-110, Cys-131, and Cys-132. Ser-153 carries the phosphoserine modification. A helical membrane pass occupies residues 183-204 (LVFYYVTGFFIAVSVITNVVET). Residues 205–223 (VPCGTVPGSKELPCGERYS) lie on the Extracellular side of the membrane. Residues 224–246 (VAFFCLDTACVMIFTVEYLLRLF) traverse the membrane as a helical segment. Topologically, residues 247-253 (AAPSRYR) are cytoplasmic. Residues 254–277 (FIRSVMSIIDVVAIMPYYIGLVMT) form a helical membrane-spanning segment. The Extracellular segment spans residues 278–283 (NNEDVS). A helical; Voltage-sensor transmembrane segment spans residues 284-306 (GAFVTLRVFRVFRIFKFSRHSQG). Topologically, residues 307–318 (LRILGYTLKSCA) are cytoplasmic. A helical membrane pass occupies residues 319–343 (SELGFLLFSLTMAIIIFATVMFYAE). Residues 344–352 (KGSSASKFT) are Extracellular-facing. The segment at residues 353–366 (SIPASFWYTIVTMT) is an intramembrane region (helical). Residues Thr-367, Leu-368, Gly-369, and Tyr-370 each contribute to the K(+) site. The Selectivity filter motif lies at 367–372 (TLGYGD). Residues 367–374 (TLGYGDMV) lie within the membrane without spanning it. Residues 378–400 (IAGKIFGSICSLSGVLVIALPVP) form a helical membrane-spanning segment. At 401–655 (VIVSNFSRIY…TSNVVKVSVL (255 aa)) the chain is on the cytoplasmic side. At Thr-459 the chain carries Phosphothreonine. The interaction with KCNIP1 and KCNIP2 stretch occupies residues 470-487 (SLIESQHHHLLHCLEKTT). Residues 474-489 (SQHHHLLHCLEKTTGL) form a mediates dendritic targeting region. Positions 523-565 (SSMQNYPSTRSPSLSSHSGLTTTCCSRRSKKTTHLPNSNLPAT) are disordered. Residues 529-548 (PSTRSPSLSSHSGLTTTCCS) are compositionally biased toward low complexity. A Phosphoserine; by CaMK2D modification is found at Ser-569. Phosphoserine is present on Ser-585. Positions 616–647 (SIPTPPALTPEGESRPPPASPGPNTNIPSITS) are disordered. Polar residues predominate over residues 637–647 (GPNTNIPSITS).

It belongs to the potassium channel family. D (Shal) (TC 1.A.1.2) subfamily. Kv4.3/KCND3 sub-subfamily. As to quaternary structure, homotetramer. Heterotetramer with KCND2. Associates with the regulatory subunits KCNIP3 and KCNIP4. Interacts with KCNE1, KCNE2, SCN1B and KCNAB1 and DLG1. Component of heteromultimeric potassium channels. Identified in potassium channel complexes containing KCND1, KCND2, KCND3, KCNIP1, KCNIP2, KCNIP3, KCNIP4, DPP6 and DPP10. Interacts with KCNIP1; each KCNIP1 monomer interacts with two adjacent KCND3 subunits, through both the N-terminal inactivation ball of a KCND3 subunit and a C-terminal helix from the adjacent KCND3 subunit, clamping them together; this interaction stabilizes the tetrameric form and modulates the channel gating kinetics namely channel activation and inactivation kinetics and rate of recovery from inactivation. Interacts with DPP6; this interaction modulates the channel gating kinetics namely channel activation and inactivation kinetics and rate of recovery from inactivation. Interacts with KCNIP2; each KCNIP2 monomer interacts with two adjacent KCND3 subunits, through both the N-terminal inactivation ball of a KCND3 subunit and a C-terminal helix from the adjacent KCND3 subunit, clamping them together; this interaction modulates the channel gating kinetics. In terms of processing, regulated through phosphorylation at Ser-569 by CaMK2D. As to expression, highly expressed in brain, in particular in the retrosplenial cortex, medial habenula, anterior thalamus, hippocampus, cerebellum and lateral geniculate and superior colliculus. Highly expressed in heart atrium (at protein level) and throughout the ventricle wall, in lung and vas deferens.

It is found in the cell membrane. The protein resides in the sarcolemma. It localises to the cell projection. Its subcellular location is the dendrite. It catalyses the reaction K(+)(in) = K(+)(out). Pore-forming (alpha) subunit of voltage-gated A-type potassium channels that mediates transmembrane potassium transport in excitable membranes, in brain and heart. In cardiomyocytes, may generate the transient outward potassium current I(To). In neurons, may conduct the transient subthreshold somatodendritic A-type potassium current (ISA). Kinetics properties are characterized by fast activation at subthreshold membrane potentials, rapid inactivation, and quick recovery from inactivation. Channel properties are modulated by interactions with regulatory subunits. Interaction with the regulatory subunits KCNIP1 or KCNIP2 modulates the channel gating kinetics namely channel activation and inactivation kinetics and rate of recovery from inactivation. Likewise, interaction with DPP6 modulates the channel gating kinetics namely channel activation and inactivation kinetics. The protein is A-type voltage-gated potassium channel KCND3 of Rattus norvegicus (Rat).